Consider the following 453-residue polypeptide: Armadillo repeat-containing X-linked protein 1 (453 aa).

Topologically, residues 1-6 (MGRTRE) are mitochondrial intermembrane. 2 mitochondrion outer membrane (MOM)-targeting sequence regions span residues 1–6 (MGRTRE) and 26–36 (RLAWGRDENEK). The helical; Signal-anchor transmembrane segment at 7–29 (AGCVAAGVVIGAGACYCVYRLAW) threads the bilayer. Residues 30–453 (GRDENEKIWD…VKVLKVLTKL (424 aa)) are Cytoplasmic-facing. Disordered regions lie at residues 58–77 (AKTN…SEVK) and 132–182 (ISGN…RAPA). Over residues 167–177 (GKSKGKARSKS) the composition is skewed to basic residues. ARM repeat units lie at residues 195-235 (PYKI…NNAA), 237-276 (SFNQ…NLSV), 358-398 (PAMT…NIND), and 415-453 (SSLF…LTKL).

It belongs to the eutherian X-chromosome-specific Armcx family. As to quaternary structure, interacts with MIRO1. In terms of tissue distribution, expressed at high levels ovary, heart, testis, prostate, brain, spleen and colon. Expressed at very low levels in liver and thymus. Not expressed in peripheral blood leukocytes. Not or reduced expressed in lung, prostate, colon, pancreas and ovarian carcinomas.

The protein localises to the mitochondrion. Its subcellular location is the mitochondrion outer membrane. Functionally, regulates mitochondrial transport during axon regeneration. Increases the proportion of motile mitochondria by recruiting stationary mitochondria into the motile pool. Enhances mitochondria movement and neurite growth in both adult axons and embryonic neurons. Promotes neuronal survival and axon regeneration after nerve injury. May link mitochondria to the Trak1-kinesin motor complex via its interaction with MIRO1. The sequence is that of Armadillo repeat-containing X-linked protein 1 (ARMCX1) from Homo sapiens (Human).